Consider the following 410-residue polypeptide: Peptidase T (410 aa).

His78 contacts Zn(2+). The active site involves Asp80. Asp140 contacts Zn(2+). The active-site Proton acceptor is the Glu174. Positions 175, 197, and 379 each coordinate Zn(2+).

Belongs to the peptidase M20B family. Zn(2+) serves as cofactor.

The protein resides in the cytoplasm. The catalysed reaction is Release of the N-terminal residue from a tripeptide.. Its function is as follows. Cleaves the N-terminal amino acid of tripeptides. The sequence is that of Peptidase T from Vibrio cholerae serotype O1 (strain ATCC 39315 / El Tor Inaba N16961).